Here is a 270-residue protein sequence, read N- to C-terminus: Protein N-terminal and lysine N-methyltransferase EFM7 (270 aa).

The segment at 1–45 is disordered; sequence MSDIESLNGGDLFAEPSDFYKPPPEPHFATYTRDDVPESSTSQQK. S-adenosyl-L-methionine contacts are provided by residues W63, 89–91, D111, W158, and S182; that span reads GAA.

Belongs to the class I-like SAM-binding methyltransferase superfamily. EFM7 family.

Its subcellular location is the cytoplasm. S-adenosyl-L-methionine-dependent protein methyltransferase that trimethylates the N-terminal glycine 'Gly-2' of elongation factor 1-alpha, before also catalyzing the mono- and dimethylation of 'Lys-3'. This chain is Protein N-terminal and lysine N-methyltransferase EFM7, found in Kluyveromyces lactis (strain ATCC 8585 / CBS 2359 / DSM 70799 / NBRC 1267 / NRRL Y-1140 / WM37) (Yeast).